A 78-amino-acid chain; its full sequence is Large ribosomal subunit protein bL28 (78 aa).

Positions 1–30 (MAAHCQVTGAGPGFGHSISHSHRRTKRRFD) are disordered.

It belongs to the bacterial ribosomal protein bL28 family.

The sequence is that of Large ribosomal subunit protein bL28 from Micrococcus luteus (strain ATCC 4698 / DSM 20030 / JCM 1464 / CCM 169 / CCUG 5858 / IAM 1056 / NBRC 3333 / NCIMB 9278 / NCTC 2665 / VKM Ac-2230) (Micrococcus lysodeikticus).